We begin with the raw amino-acid sequence, 827 residues long: Putative potassium transporter 12 (827 aa).

A disordered region spans residues 1–31; the sequence is MEEIEEGSSNNSIRRVGTGSSDRRWVDGSEV. Residues 1–82 lie on the Cytoplasmic side of the membrane; it reads MEEIEEGSSN…AGSHGHNLKD (82 aa). Residues 83-103 form a helical membrane-spanning segment; that stretch reads LSLLTTLGIAFQTLGVVYGDM. Over 104–129 the chain is Extracellular; sequence GTSPLYVFSDVFSKVPIRSEVDVLGA. A helical transmembrane segment spans residues 130-150; that stretch reads LSLVIYTIAVIPLAKYVFVVL. The Cytoplasmic segment spans residues 151-216; the sequence is KANDNGEGGT…ALETKGYLKT (66 aa). The helical transmembrane segment at 217–237 threads the bilayer; it reads LLLLLVLMGTSMIIGDGILTP. Topologically, residues 238-253 are extracellular; sequence AMSVMSAMSGLQGEVK. Residues 254 to 274 form a helical membrane-spanning segment; sequence GFGTNALVMSSIVILVALFSI. At 275–281 the chain is on the cytoplasmic side; sequence QRFGTGK. The chain crosses the membrane as a helical span at residues 282–302; the sequence is VGFLFAPVLALWFFSLGAIGI. The Extracellular segment spans residues 303 to 335; the sequence is YNLLKYDFTVIRALNPFYIVLFFNKNSKQAWSA. Residues 336–356 traverse the membrane as a helical segment; sequence LGGCVLCITGAEAMFADLGHF. Topologically, residues 357–363 are cytoplasmic; that stretch reads SVRSIQM. Residues 364-384 form a helical membrane-spanning segment; sequence AFTCVVFPCLLLAYMGQAAYL. At 385 to 402 the chain is on the extracellular side; that stretch reads TKHPEASARIFYDSVPKS. The chain crosses the membrane as a helical span at residues 403-423; sequence LFWPVFVIATLAAMIASQAMI. Residues 424-454 lie on the Cytoplasmic side of the membrane; it reads SATFSCVKQAMALGCFPRLKIIHTSKKRIGQ. The helical transmembrane segment at 455–475 threads the bilayer; the sequence is IYIPVINWFLMIMCILVVSIF. The Extracellular portion of the chain corresponds to 476–480; the sequence is RSTTH. 2 helical membrane-spanning segments follow: residues 481 to 501 and 502 to 522; these read IANAYGIAEVGVMMVSTVLVT and LVMLLIWQTNIFLALCFPLIF. Residues 523–536 are Extracellular-facing; that stretch reads GSVETIYLLAVLTK. Residues 537–557 form a helical membrane-spanning segment; the sequence is ILEGGWVPLVFATFFLTVMYI. Residues 558-827 lie on the Cytoplasmic side of the membrane; sequence WNYGSVLKYQ…ILQAGMTYMV (270 aa). Positions 728 to 750 are disordered; that stretch reads RSEPEQELDSEVLPSSSVGSSME. Low complexity predominate over residues 738–748; sequence EVLPSSSVGSS.

This sequence belongs to the HAK/KUP transporter (TC 2.A.72.3) family.

The protein resides in the cell membrane. Its function is as follows. Putative potassium transporter. The chain is Putative potassium transporter 12 (POT12) from Arabidopsis thaliana (Mouse-ear cress).